The primary structure comprises 229 residues: Transcriptional regulatory protein YxdJ (229 aa).

The 114-residue stretch at 3–116 (KIMIVEDSED…IVLAKIKSQI (114 aa)) folds into the Response regulatory domain. Aspartate 52 carries the post-translational modification 4-aspartylphosphate. A DNA-binding region (ompR/PhoB-type) is located at residues 129–227 (EKVVEYAGVQ…VRGEGYQLRA (99 aa)).

Phosphorylated by YxdK.

It localises to the cytoplasm. In terms of biological role, probable member of the two-component regulatory system YxdK/YxdJ. Positively regulates the expression of the yxdLMyxeA operon by direct interaction with its promoter region. Could also indirectly regulate the expression of the dlt operon. The protein is Transcriptional regulatory protein YxdJ (yxdJ) of Bacillus subtilis (strain 168).